The sequence spans 209 residues: Uridine kinase (209 aa).

12 to 19 (GGSGSGKT) is a binding site for ATP.

The protein belongs to the uridine kinase family.

It is found in the cytoplasm. It carries out the reaction uridine + ATP = UMP + ADP + H(+). The enzyme catalyses cytidine + ATP = CMP + ADP + H(+). It participates in pyrimidine metabolism; CTP biosynthesis via salvage pathway; CTP from cytidine: step 1/3. The protein operates within pyrimidine metabolism; UMP biosynthesis via salvage pathway; UMP from uridine: step 1/1. In Listeria welshimeri serovar 6b (strain ATCC 35897 / DSM 20650 / CCUG 15529 / CIP 8149 / NCTC 11857 / SLCC 5334 / V8), this protein is Uridine kinase.